Reading from the N-terminus, the 858-residue chain is Protein 4.1 (858 aa).

The segment at 1–125 (MTTEKSLAAE…KEIELGNSLD (125 aa)) is disordered. S14 is subject to Phosphoserine. Positions 31–50 (QQETQLEEASQAAAAEGSDQ) are enriched in low complexity. T62 bears the Phosphothreonine mark. The segment covering 63–77 (PTHEDLTKNKERTSE) has biased composition (basic and acidic residues). Low complexity predominate over residues 78–89 (SRGLSRLLSSFL). A phosphoserine mark is found at S86, S87, S97, S106, S123, S151, S153, and S154. A compositionally biased stretch (basic and acidic residues) spans 103 to 119 (EVESEKEKGEGGQKEIE). The segment at 155 to 208 (IETQPAQEEHREDPDSETKEGEGIEECSGTEVKEDPESRAEREPEASQKPVRRH) is disordered. Basic and acidic residues-rich tracts occupy residues 161–176 (QEEH…KEGE) and 185–200 (EVKE…EPEA). Phosphoserine is present on S192. The FERM domain maps to 211–492 (MHCKVSLLDD…EHHTFFRLTS (282 aa)). The residue at position 223 (Y223) is a Phosphotyrosine. At T379 the chain carries Phosphothreonine. The segment at 495–608 (TIPKSKFLAL…PAEPEPTEAW (114 aa)) is hydrophilic. A disordered region spans residues 518 to 636 (TRQASALIDR…TQKLAGKGED (119 aa)). Phosphoserine occurs at positions 522, 541, 543, and 556. Composition is skewed to basic and acidic residues over residues 581 to 595 (TPKE…RGEE) and 606 to 615 (EAWKVEKTHT). The segment at 609-707 (KVEKTHTEVT…WDKRLSTHSP (99 aa)) is spectrin--actin-binding. Over residues 616–629 (EVTVPTSNGDQTQK) the composition is skewed to polar residues. Residue Y654 is modified to Phosphotyrosine. Phosphoserine is present on residues S658, S668, S678, S703, and S706. Positions 710 to 858 (TLNINGQVPT…VHQETEISEE (149 aa)) are C-terminal (CTD). Phosphothreonine is present on residues T730 and T853.

Binds with a high affinity to glycophorin and with lower affinity to band III protein. Associates with the nuclear mitotic apparatus. Binds calmodulin, CPAP and DLG1. Also found to associate with contractile apparatus and tight junctions. Interacts with NUMA1; this interaction is negatively regulated by CDK1 during metaphase and promotes anaphase-specific localization of NUMA1 in symmetrically dividing cells. Interacts with ATP2B1; regulates small intestinal calcium absorption through regulation of membrane expression of ATP2B1. In terms of processing, O-glycosylated; contains N-acetylglucosamine side chains in the C-terminal domain. Post-translationally, phosphorylated at multiple sites by different protein kinases and each phosphorylation event selectively modulates the protein's functions. Phosphorylation on Tyr-654 reduces the ability of 4.1 to promote the assembly of the spectrin/actin/4.1 ternary complex.

It is found in the nucleus. Its subcellular location is the cytoplasm. The protein localises to the cytoskeleton. The protein resides in the cell cortex. Its function is as follows. Protein 4.1 is a major structural element of the erythrocyte membrane skeleton. It plays a key role in regulating membrane physical properties of mechanical stability and deformability by stabilizing spectrin-actin interaction. Recruits DLG1 to membranes. Required for dynein-dynactin complex and NUMA1 recruitment at the mitotic cell cortex during anaphase. This is Protein 4.1 from Mus musculus (Mouse).